The primary structure comprises 363 residues: Chorismate synthase (363 aa).

Arg-47 contributes to the NADP(+) binding site. FMN contacts are provided by residues 124–126 (RSS), Gly-285, 300–304 (KPTAT), and Arg-326.

The protein belongs to the chorismate synthase family. As to quaternary structure, homotetramer. It depends on FMNH2 as a cofactor.

It carries out the reaction 5-O-(1-carboxyvinyl)-3-phosphoshikimate = chorismate + phosphate. It participates in metabolic intermediate biosynthesis; chorismate biosynthesis; chorismate from D-erythrose 4-phosphate and phosphoenolpyruvate: step 7/7. In terms of biological role, catalyzes the anti-1,4-elimination of the C-3 phosphate and the C-6 proR hydrogen from 5-enolpyruvylshikimate-3-phosphate (EPSP) to yield chorismate, which is the branch point compound that serves as the starting substrate for the three terminal pathways of aromatic amino acid biosynthesis. This reaction introduces a second double bond into the aromatic ring system. This chain is Chorismate synthase, found in Opitutus terrae (strain DSM 11246 / JCM 15787 / PB90-1).